A 269-amino-acid chain; its full sequence is Ribosomal RNA small subunit methyltransferase A (269 aa).

S-adenosyl-L-methionine contacts are provided by Asn-18, Leu-20, Gly-45, Glu-66, Asp-91, and Asn-112.

Belongs to the class I-like SAM-binding methyltransferase superfamily. rRNA adenine N(6)-methyltransferase family. RsmA subfamily.

It localises to the cytoplasm. The enzyme catalyses adenosine(1518)/adenosine(1519) in 16S rRNA + 4 S-adenosyl-L-methionine = N(6)-dimethyladenosine(1518)/N(6)-dimethyladenosine(1519) in 16S rRNA + 4 S-adenosyl-L-homocysteine + 4 H(+). In terms of biological role, specifically dimethylates two adjacent adenosines (A1518 and A1519) in the loop of a conserved hairpin near the 3'-end of 16S rRNA in the 30S particle. May play a critical role in biogenesis of 30S subunits. This is Ribosomal RNA small subunit methyltransferase A from Vibrio parahaemolyticus serotype O3:K6 (strain RIMD 2210633).